A 453-amino-acid chain; its full sequence is TATA box-binding protein-associated factor RNA polymerase I subunit A (453 aa).

As to quaternary structure, component of the transcription factor SL1/TIF-IB complex, composed of TBP and at least TAF1A, TAF1B, TAF1C and TAF1D. In the complex interacts directly with TBP, TAF1A and TAF1B. Interaction of the SL1/TIF-IB subunits with TBP excludes interaction of TBP with the transcription factor IID (TFIID) subunits. Interacts with UBFT. Interacts with CEBPA (isoform 1 and isoform 4). Part of Pol I pre-initiation complex (PIC), in which Pol I core assembles with RRN3 and promoter-bound UTBF and SL1/TIF-IB complex.

It localises to the nucleus. The protein resides in the nucleolus. In terms of biological role, component of the transcription factor SL1/TIF-IB complex, which is involved in the assembly of the PIC (pre-initiation complex) during RNA polymerase I-dependent transcription. The rate of PIC formation probably is primarily dependent on the rate of association of SL1/TIF-IB with the rDNA promoter. SL1/TIF-IB is involved in stabilization of nucleolar transcription factor 1/UBTF on rDNA. Formation of SL1/TIF-IB excludes the association of TBP with TFIID subunits. The polypeptide is TATA box-binding protein-associated factor RNA polymerase I subunit A (Taf1a) (Mus musculus (Mouse)).